We begin with the raw amino-acid sequence, 455 residues long: Bifunctional protein GlmU (455 aa).

The tract at residues 1-226 (MGLSVVILAA…EFEILGVNDR (226 aa)) is pyrophosphorylase. Residues 8 to 11 (LAAG), K22, Q73, 78 to 79 (GT), 99 to 101 (YGD), G136, E151, N166, and N224 each bind UDP-N-acetyl-alpha-D-glucosamine. Residue D101 coordinates Mg(2+). N224 is a binding site for Mg(2+). The segment at 227–247 (TQLASLERVWQRNVAEKIMAK) is linker. The interval 248-455 (GVSIADPNRF…WQRSVKKTDK (208 aa)) is N-acetyltransferase. R330 and K348 together coordinate UDP-N-acetyl-alpha-D-glucosamine. H360 (proton acceptor) is an active-site residue. UDP-N-acetyl-alpha-D-glucosamine-binding residues include Y363 and N374. Residues A377, 383-384 (NY), S402, A420, and R437 contribute to the acetyl-CoA site.

It in the N-terminal section; belongs to the N-acetylglucosamine-1-phosphate uridyltransferase family. The protein in the C-terminal section; belongs to the transferase hexapeptide repeat family. As to quaternary structure, homotrimer. Mg(2+) is required as a cofactor.

The protein resides in the cytoplasm. It carries out the reaction alpha-D-glucosamine 1-phosphate + acetyl-CoA = N-acetyl-alpha-D-glucosamine 1-phosphate + CoA + H(+). The catalysed reaction is N-acetyl-alpha-D-glucosamine 1-phosphate + UTP + H(+) = UDP-N-acetyl-alpha-D-glucosamine + diphosphate. Its pathway is nucleotide-sugar biosynthesis; UDP-N-acetyl-alpha-D-glucosamine biosynthesis; N-acetyl-alpha-D-glucosamine 1-phosphate from alpha-D-glucosamine 6-phosphate (route II): step 2/2. It functions in the pathway nucleotide-sugar biosynthesis; UDP-N-acetyl-alpha-D-glucosamine biosynthesis; UDP-N-acetyl-alpha-D-glucosamine from N-acetyl-alpha-D-glucosamine 1-phosphate: step 1/1. The protein operates within bacterial outer membrane biogenesis; LPS lipid A biosynthesis. Functionally, catalyzes the last two sequential reactions in the de novo biosynthetic pathway for UDP-N-acetylglucosamine (UDP-GlcNAc). The C-terminal domain catalyzes the transfer of acetyl group from acetyl coenzyme A to glucosamine-1-phosphate (GlcN-1-P) to produce N-acetylglucosamine-1-phosphate (GlcNAc-1-P), which is converted into UDP-GlcNAc by the transfer of uridine 5-monophosphate (from uridine 5-triphosphate), a reaction catalyzed by the N-terminal domain. The polypeptide is Bifunctional protein GlmU (Francisella tularensis subsp. tularensis (strain SCHU S4 / Schu 4)).